The primary structure comprises 348 residues: uncharacterized protein (348 aa).

The protein belongs to the Mu gp47/PBSX XkdT family.

This is an uncharacterized protein from Bacillus subtilis (strain 168).